Reading from the N-terminus, the 58-residue chain is Small ribosomal subunit protein bS21 (58 aa).

The tract at residues 27-58 is disordered; it reads GVLSEARKHEHYEKPSVKRKKKSEAARKRKFK. The segment covering 31–42 has biased composition (basic and acidic residues); sequence EARKHEHYEKPS. The span at 43-58 shows a compositional bias: basic residues; the sequence is VKRKKKSEAARKRKFK.

It belongs to the bacterial ribosomal protein bS21 family.

This Desulfitobacterium hafniense (strain DSM 10664 / DCB-2) protein is Small ribosomal subunit protein bS21.